A 434-amino-acid polypeptide reads, in one-letter code: Asparagine--tRNA ligase (434 aa).

This sequence belongs to the class-II aminoacyl-tRNA synthetase family. As to quaternary structure, homodimer.

The protein localises to the cytoplasm. The catalysed reaction is tRNA(Asn) + L-asparagine + ATP = L-asparaginyl-tRNA(Asn) + AMP + diphosphate + H(+). The chain is Asparagine--tRNA ligase from Oenococcus oeni (strain ATCC BAA-331 / PSU-1).